The primary structure comprises 536 residues: CTP synthase (536 aa).

Positions 1 to 267 (MTKFIFVTGG…DDIVIKRLEL (267 aa)) are amidoligase domain. Residue S13 participates in CTP binding. UTP is bound at residue S13. Position 14–19 (14–19 (SLGKGI)) interacts with ATP. Y54 is a binding site for L-glutamine. D71 contacts ATP. Residues D71 and E141 each coordinate Mg(2+). Residues 148–150 (DIE), 188–193 (KTKPTQ), and K224 each bind CTP. UTP contacts are provided by residues 188-193 (KTKPTQ) and K224. Residue 240 to 242 (RDA) participates in ATP binding. One can recognise a Glutamine amidotransferase type-1 domain in the interval 293–535 (TIGLVGKYVS…IEASLNHQQS (243 aa)). Position 355 (G355) interacts with L-glutamine. The active-site Nucleophile; for glutamine hydrolysis is C382. L-glutamine-binding positions include 383-386 (LGMQ), E406, and R463. Active-site residues include H508 and E510.

The protein belongs to the CTP synthase family. In terms of assembly, homotetramer.

It carries out the reaction UTP + L-glutamine + ATP + H2O = CTP + L-glutamate + ADP + phosphate + 2 H(+). The catalysed reaction is L-glutamine + H2O = L-glutamate + NH4(+). It catalyses the reaction UTP + NH4(+) + ATP = CTP + ADP + phosphate + 2 H(+). It functions in the pathway pyrimidine metabolism; CTP biosynthesis via de novo pathway; CTP from UDP: step 2/2. Its activity is regulated as follows. Allosterically activated by GTP, when glutamine is the substrate; GTP has no effect on the reaction when ammonia is the substrate. The allosteric effector GTP functions by stabilizing the protein conformation that binds the tetrahedral intermediate(s) formed during glutamine hydrolysis. Inhibited by the product CTP, via allosteric rather than competitive inhibition. In terms of biological role, catalyzes the ATP-dependent amination of UTP to CTP with either L-glutamine or ammonia as the source of nitrogen. Regulates intracellular CTP levels through interactions with the four ribonucleotide triphosphates. The chain is CTP synthase from Staphylococcus saprophyticus subsp. saprophyticus (strain ATCC 15305 / DSM 20229 / NCIMB 8711 / NCTC 7292 / S-41).